A 216-amino-acid chain; its full sequence is Transmembrane emp24 domain-containing protein p24delta5 (216 aa).

Positions 1–27 (MAINRIAHGSLFLTVVLFFLTVNYGEA) are cleaved as a signal peptide. The Lumenal segment spans residues 28–183 (IWLTIPTTGG…REVSETTNSR (156 aa)). Positions 38 to 151 (TKCVSEEIQS…IEGVELQLRR (114 aa)) constitute a GOLD domain. The N-linked (GlcNAc...) asparagine glycan is linked to Asn86. Residues 137 to 159 (AKKEKIEGVELQLRRLEGLVLSI) adopt a coiled-coil conformation. Omega-N-methylated arginine is present on residues Arg169 and Arg174. The chain crosses the membrane as a helical span at residues 184–204 (VAWFSIMSLGVCVVVVGSQIL). Residues 205 to 216 (YLKRYFHKKKLI) are Cytoplasmic-facing. A COPII vesicle coat-binding motif is present at residues 209 to 210 (YF). The COPI vesicle coat-binding signature appears at 209 to 216 (YFHKKKLI).

This sequence belongs to the EMP24/GP25L family. Probably oligomerizes with other members of the EMP24/GP25L family. Associates with the COPI vesicle coat (coatomer). Associates with the COPII vesicle coat (coatomer). Interacts with p24beta2.

It is found in the endoplasmic reticulum membrane. Its function is as follows. Involved in vesicular protein trafficking. Mainly functions in the early secretory pathway. Thought to act as cargo receptor at the lumenal side for incorporation of secretory cargo molecules into transport vesicles and to be involved in vesicle coat formation at the cytoplasmic side. Interacts with p24beta2 at endoplasmic reticulum export sites for endoplasmic reticulum exit and coupled transport to the Golgi apparatus. Once in the Golgi, interacts very efficiently with the COPI machinery for retrograde transport back to the endoplasmic reticulum. The sequence is that of Transmembrane emp24 domain-containing protein p24delta5 from Arabidopsis thaliana (Mouse-ear cress).